Consider the following 413-residue polypeptide: MSSDMRVHSWSCSYYLDLEKQWVSGKLTLTPHSLKFIVEKTEEVLVGLPLSSIIEIRKESSLFIFGAITVLEKGQTKHWFSSLQPSRNVVFNVIEHFWRELLLSQPGTAANIPSHVTRGQELIGLMANSQKRMEDTAKDLQQQSEQLDSVLKGLEKMESDLDVADRLLTELETPSWWPFGSKFWKMPAEENLKEGVSSTCEPFGKEGVVITVPAIISERAESHSKLGKLTVLVSALEIYDSCSLLLHRFEKEDVDDIKVHSPYEVSIRQRFIGKPDVAYQLISAKMPEVIPILEVQFSSKIELLEDALVLRNKVFASSAERHAASRPKGCTPHRELPTGGQEGEQLQLQKNLPLFSEGEAQELTQILSKMKGLALDTEAELERQDAALDGITVAVDRATLNVDKQNRRMRKLM.

Positions 109–171 (AANIPSHVTR…DVADRLLTEL (63 aa)) constitute a t-SNARE coiled-coil homology 1 domain. Residues 321–342 (RHAASRPKGCTPHRELPTGGQE) form a disordered region. The t-SNARE coiled-coil homology 2 domain occupies 350–412 (KNLPLFSEGE…DKQNRRMRKL (63 aa)).

This sequence belongs to the SVAP1 family. Associates with the BLOC-1 complex. Interacts with BLOC1S6. Forms a complex containing SNAP47, VAMP2 and STX1A. Ubiquitously expressed with the most abundant expression in the brain. In brain, most highly expressed in the glomerular layer of the olfactory bulb, the cortex, striatum, hippocampus, and colliculi (at protein level).

It is found in the endomembrane system. The protein resides in the cytoplasm. Its subcellular location is the perinuclear region. Functionally, may play a role in intracellular membrane fusion. This chain is Synaptosomal-associated protein 47 (Snap47), found in Mus musculus (Mouse).